The sequence spans 475 residues: Chromosomal replication initiator protein DnaA (475 aa).

Positions 1–73 are domain I, interacts with DnaA modulators; it reads MTNSEQERWS…LSCWQAEMPE (73 aa). Residues 73–131 are domain II; sequence EVHRIDLSVRTAMRCATPAKEAPVAVEARRAERGDAKPADTRAPVMTPVAASHDALGGS. Residues 132–354 form a domain III, AAA+ region region; that stretch reads PLDPRLTFAS…GAINRLLAHS (223 aa). ATP is bound by residues Gly179, Gly181, Lys182, and Thr183. A domain IV, binds dsDNA region spans residues 355 to 475; the sequence is KLNNQPVTLD…VEALKRQLQD (121 aa).

Belongs to the DnaA family. As to quaternary structure, oligomerizes as a right-handed, spiral filament on DNA at oriC.

The protein localises to the cytoplasm. Plays an essential role in the initiation and regulation of chromosomal replication. ATP-DnaA binds to the origin of replication (oriC) to initiate formation of the DNA replication initiation complex once per cell cycle. Binds the DnaA box (a 9 base pair repeat at the origin) and separates the double-stranded (ds)DNA. Forms a right-handed helical filament on oriC DNA; dsDNA binds to the exterior of the filament while single-stranded (ss)DNA is stabiized in the filament's interior. The ATP-DnaA-oriC complex binds and stabilizes one strand of the AT-rich DNA unwinding element (DUE), permitting loading of DNA polymerase. After initiation quickly degrades to an ADP-DnaA complex that is not apt for DNA replication. Binds acidic phospholipids. The chain is Chromosomal replication initiator protein DnaA from Bradyrhizobium sp. (strain BTAi1 / ATCC BAA-1182).